The following is a 52-amino-acid chain: uncharacterized protein (52 aa).

This is an uncharacterized protein from Halalkalibacterium halodurans (strain ATCC BAA-125 / DSM 18197 / FERM 7344 / JCM 9153 / C-125) (Bacillus halodurans).